The chain runs to 90 residues: Accessory gland-specific peptide 26Ab (90 aa).

The N-terminal stretch at M1 to A21 is a signal peptide.

In terms of tissue distribution, main cells and secondary cells of the accessory glands of 1 day old virgin males (at protein level). In 5 day old virgin males, only detected in the secondary cells (at protein level). Reappears in the main cells after mating (at protein level). First detected in adult males 3-4 hr after eclosion, levels increase reaching a peak at day 3-5 which is maintained until at least day 10 of adulthood (at protein level). In unmated male adults, levels are maintained for the first 6 days of adulthood and then gradually decrease for at least the next 8 days. No expression in females.

The protein localises to the secreted. Its subcellular location is the extracellular space. The protein resides in the cytoplasm. Functionally, this protein is transferred from male to female during mating and may affect egglaying and behavior after mating. This is Accessory gland-specific peptide 26Ab from Drosophila melanogaster (Fruit fly).